A 56-amino-acid chain; its full sequence is Cytochrome b-c1 complex subunit 10 (56 aa).

Over 1–12 the chain is Mitochondrial matrix; it reads MVTRFLGPRYRE. The chain crosses the membrane as a helical span at residues 13–35; it reads LVKNWVPTAYTWGAVGAVGLVWA. Residues 36–56 are Mitochondrial intermembrane-facing; sequence TDWRLILDWVPYINGKFKKDN.

It belongs to the UQCR11/QCR10 family. In terms of assembly, component of the ubiquinol-cytochrome c oxidoreductase (cytochrome b-c1 complex, complex III, CIII), a multisubunit enzyme composed of 11 subunits. The complex is composed of 3 respiratory subunits cytochrome b, cytochrome c1 and Rieske protein UQCRFS1, 2 core protein subunits UQCRC1/QCR1 and UQCRC2/QCR2, and 6 low-molecular weight protein subunits UQCRH/QCR6, UQCRB/QCR7, UQCRQ/QCR8, UQCR10/QCR9, UQCR11/QCR10 and subunit 9, the cleavage product of Rieske protein UQCRFS1. The complex exists as an obligatory dimer and forms supercomplexes (SCs) in the inner mitochondrial membrane with NADH-ubiquinone oxidoreductase (complex I, CI) and cytochrome c oxidase (complex IV, CIV), resulting in different assemblies (supercomplex SCI(1)III(2)IV(1) and megacomplex MCI(2)III(2)IV(2)).

The protein localises to the mitochondrion inner membrane. Its function is as follows. Component of the ubiquinol-cytochrome c oxidoreductase, a multisubunit transmembrane complex that is part of the mitochondrial electron transport chain which drives oxidative phosphorylation. The respiratory chain contains 3 multisubunit complexes succinate dehydrogenase (complex II, CII), ubiquinol-cytochrome c oxidoreductase (cytochrome b-c1 complex, complex III, CIII) and cytochrome c oxidase (complex IV, CIV), that cooperate to transfer electrons derived from NADH and succinate to molecular oxygen, creating an electrochemical gradient over the inner membrane that drives transmembrane transport and the ATP synthase. The cytochrome b-c1 complex catalyzes electron transfer from ubiquinol to cytochrome c, linking this redox reaction to translocation of protons across the mitochondrial inner membrane, with protons being carried across the membrane as hydrogens on the quinol. In the process called Q cycle, 2 protons are consumed from the matrix, 4 protons are released into the intermembrane space and 2 electrons are passed to cytochrome c. QCR10 has a role in CIII assembly and RIP1 stability. The protein is Cytochrome b-c1 complex subunit 10 (UQCR11) of Homo sapiens (Human).